The chain runs to 348 residues: GMP reductase (348 aa).

An NADP(+)-binding site is contributed by 108–131 (ADFQKTKDVMALSDELIFICIDIA). Gly181 and Gly183 together coordinate K(+). Cys186 functions as the Thioimidate intermediate in the catalytic mechanism. Residue 216-239 (IIGDGGCACAGDVAKAFGGGADFV) coordinates NADP(+).

The protein belongs to the IMPDH/GMPR family. GuaC type 1 subfamily. In terms of assembly, homotetramer.

The enzyme catalyses IMP + NH4(+) + NADP(+) = GMP + NADPH + 2 H(+). Catalyzes the irreversible NADPH-dependent deamination of GMP to IMP. It functions in the conversion of nucleobase, nucleoside and nucleotide derivatives of G to A nucleotides, and in maintaining the intracellular balance of A and G nucleotides. This chain is GMP reductase, found in Vibrio vulnificus (strain CMCP6).